Consider the following 101-residue polypeptide: Large ribosomal subunit protein eL21 (101 aa).

Positions 1–18 are enriched in basic residues; sequence MVKHSRGYRTRSRSLLRK. Residues 1–23 form a disordered region; that stretch reads MVKHSRGYRTRSRSLLRKSPRER.

This sequence belongs to the eukaryotic ribosomal protein eL21 family.

The chain is Large ribosomal subunit protein eL21 from Saccharolobus islandicus (strain Y.N.15.51 / Yellowstone #2) (Sulfolobus islandicus).